A 145-amino-acid polypeptide reads, in one-letter code: Deoxyuridine 5'-triphosphate nucleotidohydrolase (145 aa).

It belongs to the dUTPase family. It depends on Mg(2+) as a cofactor.

The catalysed reaction is dUTP + H2O = dUMP + diphosphate + H(+). This enzyme is involved in nucleotide metabolism: it produces dUMP, the immediate precursor of thymidine nucleotides and it decreases the intracellular concentration of dUTP so that uracil cannot be incorporated into DNA. The polypeptide is Deoxyuridine 5'-triphosphate nucleotidohydrolase (DUT) (Fowlpox virus (strain NVSL) (FPV)).